A 100-amino-acid chain; its full sequence is Small ribosomal subunit protein uS14c (100 aa).

Belongs to the universal ribosomal protein uS14 family. As to quaternary structure, part of the 30S ribosomal subunit.

Its subcellular location is the plastid. It localises to the chloroplast. Functionally, binds 16S rRNA, required for the assembly of 30S particles. The polypeptide is Small ribosomal subunit protein uS14c (Tupiella akineta (Green alga)).